The sequence spans 148 residues: 3-dehydroquinate dehydratase (148 aa).

Tyr-23 acts as the Proton acceptor in catalysis. Substrate contacts are provided by Asn-74, His-80, and Asp-87. His-100 serves as the catalytic Proton donor. Residues 101–102 (IS) and Arg-111 each bind substrate.

Belongs to the type-II 3-dehydroquinase family. As to quaternary structure, homododecamer.

The enzyme catalyses 3-dehydroquinate = 3-dehydroshikimate + H2O. Its pathway is metabolic intermediate biosynthesis; chorismate biosynthesis; chorismate from D-erythrose 4-phosphate and phosphoenolpyruvate: step 3/7. Its function is as follows. Catalyzes a trans-dehydration via an enolate intermediate. The polypeptide is 3-dehydroquinate dehydratase (Caldanaerobacter subterraneus subsp. tengcongensis (strain DSM 15242 / JCM 11007 / NBRC 100824 / MB4) (Thermoanaerobacter tengcongensis)).